Reading from the N-terminus, the 361-residue chain is S-adenosylmethionine-dependent nucleotide dehydratase RSAD2 (361 aa).

A Radical SAM core domain is found at 69–289; it reads PTTPTSVNYH…LERHKEVSCL (221 aa). 3 residues coordinate [4Fe-4S] cluster: cysteine 83, cysteine 87, and cysteine 90. Lysine 197 is subject to N6-acetyllysine. Residue lysine 206 forms a Glycyl lysine isopeptide (Lys-Gly) (interchain with G-Cter in ubiquitin) linkage.

The protein belongs to the radical SAM superfamily. RSAD2 family. As to quaternary structure, homodimer. Interacts with IRAK1 and TRAF6. Interacts with FPPS. Interacts with HADHB. Interacts (via C-terminus) with VAPA/VAP33 (via C-terminus). (Microbial infection) Interacts with human cytomegalovirus/HHV-5 protein vMIA/UL37; this interaction results in RSAD2/viperin relocalization from the endoplasmic reticulum to the mitochondria. In terms of assembly, (Microbial infection) Interacts (via N-terminus) with enterovirus A71 protein 2C; this interaction inhibits viral replication. As to quaternary structure, (Microbial infection) Interacts with herpes simplex virus 1/HHV-1 glycoprotein D; this interaction inhibits HHV-1 replication by facilitating IRF7-mediated IFN-beta production. Requires [4Fe-4S] cluster as cofactor. Acetylated by HAT1. HAT1-mediated acetylation of Lys-197 in turn recruits UBE4A that stimulates RSAD2 polyubiquitination leading to proteasomal degradation. In terms of processing, 'Lys-6'-linked polyubiquitination at Lys-206 leads to RSAD2 protein degradation.

Its subcellular location is the endoplasmic reticulum membrane. It is found in the golgi apparatus. The protein localises to the endoplasmic reticulum. The protein resides in the lipid droplet. It localises to the mitochondrion. Its subcellular location is the mitochondrion inner membrane. It is found in the mitochondrion outer membrane. The enzyme catalyses CTP + AH2 + S-adenosyl-L-methionine = 3'-deoxy-3',4'-didehydro-CTP + 5'-deoxyadenosine + L-methionine + A + H2O + H(+). With respect to regulation, IRAK1 and TRAF6 synergistically activate RSAD2 increasing its activity with CTP as substrate about 10-fold. Its function is as follows. Interferon-inducible antiviral protein which plays a major role in the cell antiviral state induced by type I and type II interferon. Catalyzes the conversion of cytidine triphosphate (CTP) to 3'-deoxy-3',4'-didehydro-CTP (ddhCTP) via a SAM-dependent radical mechanism. In turn, ddhCTP acts as a chain terminator for the RNA-dependent RNA polymerases from multiple viruses and directly inhibits viral replication. Therefore, inhibits a wide range of DNA and RNA viruses, including human cytomegalovirus (HCMV), hepatitis C virus (HCV), west Nile virus (WNV), dengue virus, sindbis virus, influenza A virus, sendai virus, vesicular stomatitis virus (VSV), zika virus, and human immunodeficiency virus (HIV-1). Also promotes TLR7 and TLR9-dependent production of IFN-beta production in plasmacytoid dendritic cells (pDCs) by facilitating 'Lys-63'-linked ubiquitination of IRAK1 by TRAF6. Plays a role in CD4+ T-cells activation and differentiation. Facilitates T-cell receptor (TCR)-mediated GATA3 activation and optimal T-helper 2 (Th2) cytokine production by modulating NFKB1 and JUNB activities. Can inhibit secretion of soluble proteins. This chain is S-adenosylmethionine-dependent nucleotide dehydratase RSAD2, found in Homo sapiens (Human).